Reading from the N-terminus, the 949-residue chain is Glutamate receptor ionotropic, kainate 1 (949 aa).

Positions Met-1–Pro-30 are cleaved as a signal peptide. The Extracellular segment spans residues Gln-31 to Pro-576. N-linked (GlcNAc...) asparagine glycosylation is found at Asn-68, Asn-74, Asn-276, Asn-379, Asn-428, Asn-439, and Asn-446. Pro-531, Thr-533, and Arg-538 together coordinate L-glutamate. An N-linked (GlcNAc...) asparagine glycan is attached at Asn-561. Residues Asp-577–Ala-597 traverse the membrane as a helical segment. At Arg-598–Gly-653 the chain is on the cytoplasmic side. Residues Ile-654–Leu-674 form a helical membrane-spanning segment. Residues Thr-675–Asn-834 lie on the Extracellular side of the membrane. L-glutamate is bound by residues Ser-704 and Thr-705. Ser-725 carries the post-translational modification Phosphoserine; by PKC. Glu-753 provides a ligand contact to L-glutamate. Thr-761 carries the post-translational modification Phosphothreonine; by PKC. Residues Cys-765 and Cys-819 are joined by a disulfide bond. A glycan (N-linked (GlcNAc...) asparagine) is linked at Asn-766. Residues Ile-835–Gly-855 traverse the membrane as a helical segment. The Cytoplasmic segment spans residues Glu-856–Ala-949.

It belongs to the glutamate-gated ion channel (TC 1.A.10.1) family. GRIK1 subfamily. As to quaternary structure, homotetramer or heterotetramer of pore-forming glutamate receptor subunits. Tetramers may be formed by the dimerization of dimers. Can form functional heteromeric receptors with GRIK4 and GRIK5. Interacts with KLHL17. As to expression, expressed in the olfactory bulb (at protein level). Expressed in subsets of neurons throughout the developing and adult central and peripheral nervous systems. In the CNS principally in the medial amygdaloid nuclei, medial habenulae, pyriform and cingulate cortices, and Purkinje cell layer. Also highly expressed in embryonic and adult dorsal root ganglia. Expressed at high levels in the trigeminal ganglion neurons.

The protein localises to the cell membrane. It is found in the postsynaptic cell membrane. It carries out the reaction Ca(2+)(in) = Ca(2+)(out). In terms of biological role, ionotropic glutamate receptor that functions as a cation-permeable ligand-gated ion channel, gated by L-glutamate and the glutamatergic agonist kainic acid. L-glutamate acts as an excitatory neurotransmitter at many synapses in the central nervous system. Binding of the excitatory neurotransmitter L-glutamate induces a conformation change, leading to the opening of the cation channel, and thereby converts the chemical signal to an electrical impulse. The receptor then desensitizes rapidly and enters a transient inactive state, characterized by the presence of bound agonist. The sequence is that of Glutamate receptor ionotropic, kainate 1 (Grik1) from Rattus norvegicus (Rat).